The following is a 263-amino-acid chain: Rano class II histocompatibility antigen, B-1 beta chain (263 aa).

The N-terminal stretch at methionine 1–glycine 27 is a signal peptide. The beta-1 stretch occupies residues arginine 28–leucine 120. Topologically, residues arginine 28–lysine 224 are extracellular. Intrachain disulfides connect cysteine 42-cysteine 104 and cysteine 143-cysteine 199. An N-linked (GlcNAc...) asparagine glycan is attached at asparagine 46. Residues glutamate 121 to tryptophan 214 are beta-2. Positions proline 123–threonine 211 constitute an Ig-like C1-type domain. Residues arginine 215–lysine 224 form a connecting peptide region. A helical membrane pass occupies residues methionine 225–isoleucine 245. Residues arginine 246–glutamine 263 are Cytoplasmic-facing. Residue lysine 251 forms a Glycyl lysine isopeptide (Lys-Gly) (interchain with G-Cter in ubiquitin) linkage.

This sequence belongs to the MHC class II family.

The protein localises to the membrane. In terms of biological role, involved in the presentation of foreign antigens to the immune system. The polypeptide is Rano class II histocompatibility antigen, B-1 beta chain (RT1-Bb) (Rattus norvegicus (Rat)).